The primary structure comprises 129 residues: Gene 58 protein (129 aa).

Residues 87–129 (GNIPVQRKPARKPSRRVFGESRSSGSSGSTVRPGIRGRSTPWS) form a disordered region. The segment covering 106-115 (ESRSSGSSGS) has biased composition (low complexity).

This is Gene 58 protein (58) from Mycobacterium (Mycobacteriophage D29).